The primary structure comprises 473 residues: Glutamate--tRNA ligase 2 (473 aa).

Residues 11-21 (PSPTGYLHIGG) carry the 'HIGH' region motif. Residues 113 to 133 (KARAEGRPPRYDGRWRDRDPS) are compositionally biased toward basic and acidic residues. The tract at residues 113-136 (KARAEGRPPRYDGRWRDRDPSEAP) is disordered. A 'KMSKS' region motif is present at residues 240–244 (KLSKR). ATP is bound at residue Lys-243.

This sequence belongs to the class-I aminoacyl-tRNA synthetase family. Glutamate--tRNA ligase type 1 subfamily. As to quaternary structure, monomer.

The protein resides in the cytoplasm. The catalysed reaction is tRNA(Glu) + L-glutamate + ATP = L-glutamyl-tRNA(Glu) + AMP + diphosphate. Catalyzes the attachment of glutamate to tRNA(Glu) in a two-step reaction: glutamate is first activated by ATP to form Glu-AMP and then transferred to the acceptor end of tRNA(Glu). The polypeptide is Glutamate--tRNA ligase 2 (Brucella abortus (strain S19)).